A 169-amino-acid chain; its full sequence is Ribosome maturation factor RimM (169 aa).

Residues 97-169 (EDEYYWTDLV…TITADWGLDY (73 aa)) enclose the PRC barrel domain.

This sequence belongs to the RimM family. Binds ribosomal protein uS19.

The protein localises to the cytoplasm. Its function is as follows. An accessory protein needed during the final step in the assembly of 30S ribosomal subunit, possibly for assembly of the head region. Essential for efficient processing of 16S rRNA. May be needed both before and after RbfA during the maturation of 16S rRNA. It has affinity for free ribosomal 30S subunits but not for 70S ribosomes. This is Ribosome maturation factor RimM from Neisseria meningitidis serogroup B (strain ATCC BAA-335 / MC58).